The chain runs to 83 residues: Large ribosomal subunit protein eL43 (83 aa).

Positions 38, 41, 56, and 59 each coordinate Zn(2+). The segment at 38-59 (CPVCGRRAVKRISTGIWQCTKC) adopts a C4-type zinc-finger fold.

This sequence belongs to the eukaryotic ribosomal protein eL43 family. Putative zinc-binding subfamily. Part of the 50S ribosomal subunit. Zn(2+) serves as cofactor.

Binds to the 23S rRNA. The chain is Large ribosomal subunit protein eL43 from Pyrococcus horikoshii (strain ATCC 700860 / DSM 12428 / JCM 9974 / NBRC 100139 / OT-3).